We begin with the raw amino-acid sequence, 607 residues long: UvrABC system protein C (607 aa).

Residues 16 to 94 (GRPGVYRMFD…IKEWRPPYNI (79 aa)) enclose the GIY-YIG domain. Residues 203-238 (QQLGNELNAEMEKAAMALDFEKAAELRDQIALLRRV) form the UVR domain.

This sequence belongs to the UvrC family. As to quaternary structure, interacts with UvrB in an incision complex.

It localises to the cytoplasm. Its function is as follows. The UvrABC repair system catalyzes the recognition and processing of DNA lesions. UvrC both incises the 5' and 3' sides of the lesion. The N-terminal half is responsible for the 3' incision and the C-terminal half is responsible for the 5' incision. In Pseudomonas putida (strain ATCC 700007 / DSM 6899 / JCM 31910 / BCRC 17059 / LMG 24140 / F1), this protein is UvrABC system protein C.